Here is a 790-residue protein sequence, read N- to C-terminus: GATOR2 complex protein WDR24 (790 aa).

WD repeat units lie at residues 72–112 (SLNL…RNKQ), 118–158 (EHKR…SVST), 161–201 (GQSE…RCER), 205–245 (AHNG…AKEM), 249–291 (QTIA…VPAA), and 295–338 (EHRD…VERA). The residue at position 155 (Ser155) is a Phosphoserine; by AMPK. Residues Ser470 and Ser496 each carry the phosphoserine modification. Thr581 is modified (phosphothreonine). 2 positions are modified to phosphoserine: Ser594 and Ser598. The segment at 718 to 740 (NCSHCKRPMSSRGWVCDRCHRCA) adopts a C4-type zinc-finger fold. Positions 719, 722, 733, 736, 743, 746, 757, 760, 762, 765, 768, 779, 783, 785, and 787 each coordinate Zn(2+). Residues 741–790 (SMCAVCHHVVKGLFVWCQGCSHGGHLQHIMKWLEGSSHCPAGCGHLCEYS) form an RING-type; atypical zinc finger.

This sequence belongs to the WD repeat WDR24 family. As to quaternary structure, component of the GATOR2 subcomplex, composed of MIOS, SEC13, SEH1L, WDR24 and WDR59. The GATOR2 complex interacts with CASTOR1 and CASTOR2; the interaction is negatively regulated by arginine. The GATOR2 complex interacts with SESN1, SESN2 and SESN3; the interaction is negatively regulated by amino acids. SESN1, SESN2 and SESN3 convey leucine availability via direct interaction with SEH1L and WDR24. Post-translationally, phosphorylation at Ser-155 by AMPK in response to glucose deprivation inactivates WDR24 by promoting interaction with 14-3-3 proteins, such as YWHAG, preventing assembly of the GATOR2 complex. Autoubiquitinated; MIOS is required to prevent autoubiquitination.

Its subcellular location is the lysosome membrane. It carries out the reaction S-ubiquitinyl-[E2 ubiquitin-conjugating enzyme]-L-cysteine + [acceptor protein]-L-lysine = [E2 ubiquitin-conjugating enzyme]-L-cysteine + N(6)-ubiquitinyl-[acceptor protein]-L-lysine.. It participates in protein modification; protein ubiquitination. The GATOR2 complex is negatively regulated by the upstream amino acid sensors CASTOR1 and SESN2, which sequester the GATOR2 complex in absence of amino acids. In the presence of abundant amino acids, GATOR2 is released from CASTOR1 and SESN2 and activated. In terms of biological role, catalytic component of the GATOR2 complex, a multiprotein complex that acts as an activator of the amino acid-sensing branch of the mTORC1 signaling pathway. The GATOR2 complex indirectly activates mTORC1 through the inhibition of the GATOR1 subcomplex. GATOR2 probably acts as an E3 ubiquitin-protein ligase toward GATOR1. In the presence of abundant amino acids, the GATOR2 complex mediates ubiquitination of the NPRL2 core component of the GATOR1 complex, leading to GATOR1 inactivation. In the absence of amino acids, GATOR2 is inhibited, activating the GATOR1 complex. In addition to its role in regulation of the mTORC1 complex, promotes the acidification of lysosomes and facilitates autophagic flux. Within the GATOR2 complex, WDR24 constitutes the catalytic subunit that mediates 'Lys-6'-linked ubiquitination of NPRL2. This Homo sapiens (Human) protein is GATOR2 complex protein WDR24.